The sequence spans 746 residues: NAD(P)H-quinone oxidoreductase subunit 5, chloroplastic (746 aa).

16 helical membrane-spanning segments follow: residues 9 to 29, 40 to 60, 89 to 109, 125 to 145, 147 to 167, 185 to 205, 221 to 241, 258 to 278, 280 to 300, 327 to 347, 354 to 374, 396 to 416, 425 to 445, 547 to 567, 608 to 628, and 723 to 743; these read WIIP…LLLF, WTFL…YLSI, IDPL…LVLI, FAYM…SNLI, VYFF…FWFT, GDFG…SFEF, VNLL…IAKS, TPIS…FLVA, LLPL…IGII, LGYM…FHLI, ALLF…VGYS, TAFL…CFWS, LLFS…TAFY, ILFP…IGIP, FSVS…KPFY, and YLFL…FFYF.

It belongs to the complex I subunit 5 family. In terms of assembly, NDH is composed of at least 16 different subunits, 5 of which are encoded in the nucleus.

Its subcellular location is the plastid. It localises to the chloroplast thylakoid membrane. The enzyme catalyses a plastoquinone + NADH + (n+1) H(+)(in) = a plastoquinol + NAD(+) + n H(+)(out). The catalysed reaction is a plastoquinone + NADPH + (n+1) H(+)(in) = a plastoquinol + NADP(+) + n H(+)(out). In terms of biological role, NDH shuttles electrons from NAD(P)H:plastoquinone, via FMN and iron-sulfur (Fe-S) centers, to quinones in the photosynthetic chain and possibly in a chloroplast respiratory chain. The immediate electron acceptor for the enzyme in this species is believed to be plastoquinone. Couples the redox reaction to proton translocation, and thus conserves the redox energy in a proton gradient. The protein is NAD(P)H-quinone oxidoreductase subunit 5, chloroplastic (ndhF) of Lepidium virginicum (Virginia pepperweed).